Reading from the N-terminus, the 157-residue chain is Jacalin-related lectin 15 (157 aa).

The Jacalin-type lectin domain occupies 13-152 (ADKLEAKGGN…LTSLGAYFAP (140 aa)).

Belongs to the jacalin lectin family. As to expression, expressed in stems, leaves and flowers. Not detected in roots.

Confers broad resistance to potexviruses. Inhibits virus accumulation at the cellular level. The sequence is that of Jacalin-related lectin 15 (JAL15) from Arabidopsis thaliana (Mouse-ear cress).